A 534-amino-acid chain; its full sequence is MANFSFVSGAKFRPFSYQEMLQPLQAYTQEYNTIQEGMGELGTKADVFERMANEQTDPQAYAMYKQYSNDLAAQAESLAKQGLTPASRQGLIDMKRRYSSEIVPIEQAYKRRQELVDEQRKLQAQDSTLLFDRPASTLSLDELISNPALSPQSYSGALLSKQVGTAAQNLAKEVRENPRKWRTILGNQYYETIMQKGFRPEEIMQAVQNNPEASPILQGIVEDAVGSSGIRNWNDENILNRAYDYARQGLWNAVGETQYQTLSNKAYDYAMQERLAAAKKGKTEGTPSAVFRSVPKTKVDGDKKTTELNDELQFIQQLRANPSMINEEVERVNPGYPTQYGVNVGGGIYKVKPHAERLQQIIKKYDMKDGNMDQLEQKLQADIRSSAVRDFIYKPNITQSDLISQVIKENARTLGAATESTGLYELDDNRKGDPIKLKNISDYFTGDNDISYDPEVGLIINATKDGKTKSAVIDPELIDDADRSVAGYMNNINVLLENGYDVEAQRYINTMMNYIYGKFNTLAKRQSNTDSKLE.

In terms of assembly, homododecamer. Localizes inside the capsid.

Its subcellular location is the virion. In terms of biological role, protein that is stored in high quantity in the viral capsid and may play a role during ejection. This is Cargo protein 2 from Bacteroides intestinalis (Bacteroides phage PhiCrAss001).